Here is a 445-residue protein sequence, read N- to C-terminus: 26S proteasome regulatory subunit RPN5 (445 aa).

Serine 2 carries the post-translational modification N-acetylserine. The region spanning 233-407 is the PCI domain; the sequence is EYLEVAQYLQ…KIVNFEKPKN (175 aa).

This sequence belongs to the proteasome subunit p55 family. Post-translationally, N-acetylated by NAT1.

Functionally, acts as a regulatory subunit of the 26S proteasome which is involved in the ATP-dependent degradation of ubiquitinated proteins. This chain is 26S proteasome regulatory subunit RPN5 (RPN5), found in Saccharomyces cerevisiae (strain ATCC 204508 / S288c) (Baker's yeast).